The primary structure comprises 268 residues: Microtubule-associated protein RP/EB family member 1 (268 aa).

Ala2 carries the post-translational modification N-acetylalanine. Residues 14-116 enclose the Calponin-homology (CH) domain; the sequence is NLSRHDMLAW…FVQWFKKFFD (103 aa). Lys66 is subject to N6-crotonyllysine. Position 124 is a phosphotyrosine (Tyr124). The tract at residues 124 to 268 is interaction with MTUS2/TIP150; that stretch reads YDPVAARQGQ…GGPQEEQEEY (145 aa). Residues 146–160 are compositionally biased toward low complexity; sequence LNKPKKPLSSSSAAP. A disordered region spans residues 146 to 191; sequence LNKPKKPLSSSSAAPQRPISTQRTAAAPKAGPGVVRKNPGVGNGDD. Residues Ser155 and Ser165 each carry the phosphoserine modification. The EB1 C-terminal domain maps to 185-255; it reads GVGNGDDEAA…LYATDEGFVI (71 aa). The interval 185 to 268 is interaction with CDK5RAP2; it reads GVGNGDDEAA…GGPQEEQEEY (84 aa). Residues 206-211 form an interaction with APC region; sequence TVEDLE. The interval 208 to 268 is DCTN1-binding; it reads EDLEKERDFY…GGPQEEQEEY (61 aa). The residue at position 220 (Lys220) is an N6-acetyllysine. Residues 220–242 form an APC-binding region; sequence KLRNIELICQENEGENDPVLQRI. The tract at residues 232 to 255 is interaction with SKA1; the sequence is EGENDPVLQRIVDILYATDEGFVI.

The protein belongs to the MAPRE family. In terms of assembly, homodimer. Heterodimer with MAPRE3. Interacts with DCTN1, DCTN2, TERF1 and dynein intermediate chain. Interaction with DIAPH1 and DIAPH2. Interacts (via C-terminal residues 206-211) with APC (via C-terminal residues 2674-2845); the interaction inhibits association with and bundling of F-actin. Interacts with CLASP2, DST, KIF2C and STIM1; probably required for their targeting to the growing microtubule plus ends. Interacts with MTUS2; interaction is direct and probably targets MTUS2 to microtubules. Interacts (via C-terminus) with SKA1 (via SXIP motif); the interaction is direct and stabilizes the kinetochore-microtubule attachment of the SKA1 complex. Interacts with APC2. Interacts with CLASP1. Interacts with CDK5RAP2. Interacts with MACF1. Interacts with RABL2/RABL2A; binds preferentially to GTP-bound RABL2. Interacts with KCNAB2. Interacts (via C-terminus) with CLIP1. Interacts with SLAIN2 and SLAIN1. Interacts with KIF18B; this interaction is required for efficient accumulation of KIF18B at microtubule plus ends. Interacts with MISP. Interacts with KNSTRN. Interacts with NCKAP5L. Interacts with CAMSAP2. Interacts with PDE4DIP isoform 13/MMG8/SMYLE; this interaction is required for its recruitment to the Golgi apparatus. Forms a pericentrosomal complex with AKAP9, CDK5RAP2 and PDE4DIP isoform 13/MMG8/SMYLE; within this complex, MAPRE1 binding to CDK5RAP2 may be mediated by PDE4DIP. Interacts with AKNA. Interacts with GAS2L1, GAS2L2, and GAS2L3. Interacts with RARRES1 and AGBL2. Acetylation at Lys-220 by KAT2B/PCAF promotes dynamic kinetochore-microtubule interactions in early mitosis. Post-translationally, crotonylated by KAT5 during mitosis, promoting astral microtubule plasticity and dynamic connection between astral microtubules and the cortex during mitotic chromosome segregation, thereby ensuring accurate spindle positioning in mitosis. Decrotonylated by HDAC3.

The protein localises to the cytoplasm. It is found in the cytoskeleton. Its subcellular location is the microtubule organizing center. The protein resides in the centrosome. It localises to the golgi apparatus. The protein localises to the spindle. It is found in the spindle pole. Functionally, plus-end tracking protein (+TIP) that binds to the plus-end of microtubules and regulates the dynamics of the microtubule cytoskeleton. Recruits other +TIP proteins to microtubules by binding to a conserved Ser-X-Leu-Pro (SXLP) motif in their polypeptide chains. Promotes cytoplasmic microtubule nucleation and elongation. Involved in mitotic spindle positioning by stabilizing microtubules and promoting dynamic connection between astral microtubules and the cortex during mitotic chromosome segregation. Assists chromosome alignment in metaphase by recruiting the SKA complex to the spindle and stabilizing its interactions with microtubule bundles (K-fibers). Also acts as a regulator of minus-end microtubule organization: interacts with the complex formed by AKAP9 and PDE4DIP, leading to recruit CAMSAP2 to the Golgi apparatus, thereby tethering non-centrosomal minus-end microtubules to the Golgi, an important step for polarized cell movement. Promotes elongation of CAMSAP2-decorated microtubule stretches on the minus-end of microtubules. Acts as a regulator of autophagosome transport via interaction with CAMSAP2. Functions downstream of Rho GTPases and DIAPH1 in stable microtubule formation. May play a role in cell migration. The protein is Microtubule-associated protein RP/EB family member 1 (MAPRE1) of Pongo abelii (Sumatran orangutan).